We begin with the raw amino-acid sequence, 353 residues long: Quinolinate synthase (353 aa).

Iminosuccinate-binding residues include histidine 47 and serine 68. Position 113 (cysteine 113) interacts with [4Fe-4S] cluster. Residues tyrosine 139–asparagine 141 and serine 156 contribute to the iminosuccinate site. Residue cysteine 200 participates in [4Fe-4S] cluster binding. Iminosuccinate is bound by residues histidine 226 to glutamate 228 and threonine 243. Cysteine 297 contributes to the [4Fe-4S] cluster binding site.

This sequence belongs to the quinolinate synthase family. Type 1 subfamily. [4Fe-4S] cluster serves as cofactor.

It is found in the cytoplasm. The catalysed reaction is iminosuccinate + dihydroxyacetone phosphate = quinolinate + phosphate + 2 H2O + H(+). The protein operates within cofactor biosynthesis; NAD(+) biosynthesis; quinolinate from iminoaspartate: step 1/1. Catalyzes the condensation of iminoaspartate with dihydroxyacetone phosphate to form quinolinate. The polypeptide is Quinolinate synthase (Yersinia pseudotuberculosis serotype O:3 (strain YPIII)).